The chain runs to 323 residues: tRNA N6-adenosine threonylcarbamoyltransferase (323 aa).

Histidine 105, histidine 109, and tyrosine 126 together coordinate Fe cation. Substrate-binding positions include 126-130 (YVSGG), aspartate 158, glycine 171, glutamate 175, and asparagine 255. Residue aspartate 283 participates in Fe cation binding.

The protein belongs to the KAE1 / TsaD family. As to quaternary structure, monomer. Component of the KEOPS complex that consists of Kae1, Bud32, Cgi121 and Pcc1; the whole complex dimerizes. Requires Fe(2+) as cofactor.

It localises to the cytoplasm. It carries out the reaction L-threonylcarbamoyladenylate + adenosine(37) in tRNA = N(6)-L-threonylcarbamoyladenosine(37) in tRNA + AMP + H(+). In terms of biological role, required for the formation of a threonylcarbamoyl group on adenosine at position 37 (t(6)A37) in tRNAs that read codons beginning with adenine. Is a component of the KEOPS complex that is probably involved in the transfer of the threonylcarbamoyl moiety of threonylcarbamoyl-AMP (TC-AMP) to the N6 group of A37. Kae1 likely plays a direct catalytic role in this reaction, but requires other protein(s) of the complex to fulfill this activity. The sequence is that of tRNA N6-adenosine threonylcarbamoyltransferase from Archaeoglobus fulgidus (strain ATCC 49558 / DSM 4304 / JCM 9628 / NBRC 100126 / VC-16).